A 234-amino-acid polypeptide reads, in one-letter code: MAGIISPSPTALYFTSNVGGRRLKAVSWAGKSVSGNVIRRRSLRIAAELKFVNAEEAKQLIAEEGYSVVDVRDKTQFERAHIKSCSHIPLFIYNEDNDIGTIIKRTVHNNFSGLFFGLPFTKVNPEFLKSVRNEFSQDSKLLLVCQEGLRSAAAASRLEEAGYENIACVTSGLQSVKPGTFESVGSTELQNAGKAGLITIQGKISAVLGTVLVCAYLFIQFFPDQAEKLFPPTS.

Residues 1–47 constitute a chloroplast transit peptide; the sequence is MAGIISPSPTALYFTSNVGGRRLKAVSWAGKSVSGNVIRRRSLRIAA. The region spanning 62–185 is the Rhodanese domain; that stretch reads AEEGYSVVDV…VKPGTFESVG (124 aa). Residue Cys-145 is the Cysteine persulfide intermediate of the active site. Residues 204–222 traverse the membrane as a helical segment; it reads ISAVLGTVLVCAYLFIQFF.

It localises to the plastid. Its subcellular location is the chloroplast. It is found in the membrane. The polypeptide is Rhodanese-like domain-containing protein 9, chloroplastic (STR9) (Arabidopsis thaliana (Mouse-ear cress)).